Here is a 365-residue protein sequence, read N- to C-terminus: Peptide chain release factor 2 (365 aa).

Position 251 is an N5-methylglutamine (Q251).

It belongs to the prokaryotic/mitochondrial release factor family. Methylated by PrmC. Methylation increases the termination efficiency of RF2.

The protein resides in the cytoplasm. In terms of biological role, peptide chain release factor 2 directs the termination of translation in response to the peptide chain termination codons UGA and UAA. This chain is Peptide chain release factor 2, found in Aliarcobacter butzleri (strain RM4018) (Arcobacter butzleri).